We begin with the raw amino-acid sequence, 246 residues long: Probable transcriptional regulatory protein HD_0596 (246 aa).

It belongs to the TACO1 family.

It is found in the cytoplasm. The sequence is that of Probable transcriptional regulatory protein HD_0596 from Haemophilus ducreyi (strain 35000HP / ATCC 700724).